The chain runs to 257 residues: Synaptosomal-associated protein 29 (257 aa).

The disordered stretch occupies residues 1 to 42; it reads MSGYPKSYNPFDDDVEDEDTRPAPWKDARDLPDGPDPPIDRQ. Positions 20–32 are enriched in basic and acidic residues; the sequence is TRPAPWKDARDLP. A phosphoserine mark is found at serine 77, serine 78, serine 114, serine 163, serine 181, serine 203, and serine 209. The t-SNARE coiled-coil homology domain maps to 195–257; sequence RAYHQKIDSN…KSTEKKVRQL (63 aa).

The protein belongs to the SNAP-25 family. As to quaternary structure, forms a SNARE complex, composed of VAMP8, SNAP29 and STX17, involved in fusion of autophagosome with lysosome. Interacts with multiple syntaxins including STX6. Interacts with EIPR1. Interacts with STX17; this interaction is increased in the absence of TMEM39A. In terms of tissue distribution, widely expressed.

Its subcellular location is the cytoplasm. It localises to the golgi apparatus membrane. The protein localises to the cytoplasmic vesicle. The protein resides in the autophagosome membrane. It is found in the cell projection. Its subcellular location is the cilium membrane. Functionally, SNAREs, soluble N-ethylmaleimide-sensitive factor-attachment protein receptors, are essential proteins for fusion of cellular membranes. SNAREs localized on opposing membranes assemble to form a trans-SNARE complex, an extended, parallel four alpha-helical bundle that drives membrane fusion. SNAP29 is a SNARE involved in autophagy through the direct control of autophagosome membrane fusion with the lysososome membrane. Also plays a role in ciliogenesis by regulating membrane fusions. This chain is Synaptosomal-associated protein 29, found in Rattus norvegicus (Rat).